The chain runs to 78 residues: MEGEQLQTAPYNPRFPQQNQTKHCWANYVDYYGCVKHYNGDNSKCQTFFNSMNSLCPAAWISEWDEQKAADLFPSDRV.

Residues threonine 21 to tryptophan 64 form the CHCH domain. A Cx9C motif motif is present at residues cysteine 24 to cysteine 34. 2 disulfide bridges follow: cysteine 24-cysteine 56 and cysteine 34-cysteine 45. The Cx10C motif motif lies at cysteine 45–cysteine 56.

Belongs to the cytochrome c oxidase subunit 6B family. As to quaternary structure, component of the cytochrome c oxidase (complex IV, CIV), a multisubunit enzyme composed of a catalytic core of 3 subunits and several supernumerary subunits. The complex exists as a monomer or a dimer and forms supercomplexes (SCs) in the inner mitochondrial membrane with ubiquinol-cytochrome c oxidoreductase (cytochrome b-c1 complex, complex III, CIII).

Its subcellular location is the mitochondrion inner membrane. The protein operates within energy metabolism; oxidative phosphorylation. In terms of biological role, component of the cytochrome c oxidase, the last enzyme in the mitochondrial electron transport chain which drives oxidative phosphorylation. The respiratory chain contains 3 multisubunit complexes succinate dehydrogenase (complex II, CII), ubiquinol-cytochrome c oxidoreductase (cytochrome b-c1 complex, complex III, CIII) and cytochrome c oxidase (complex IV, CIV), that cooperate to transfer electrons derived from NADH and succinate to molecular oxygen, creating an electrochemical gradient over the inner membrane that drives transmembrane transport and the ATP synthase. Cytochrome c oxidase is the component of the respiratory chain that catalyzes the reduction of oxygen to water. Electrons originating from reduced cytochrome c in the intermembrane space (IMS) are transferred via the dinuclear copper A center (CU(A)) of subunit 2 and heme A of subunit 1 to the active site in subunit 1, a binuclear center (BNC) formed by heme A3 and copper B (CU(B)). The BNC reduces molecular oxygen to 2 water molecules using 4 electrons from cytochrome c in the IMS and 4 protons from the mitochondrial matrix. The chain is Probable cytochrome c oxidase subunit 6B from Dictyostelium discoideum (Social amoeba).